A 156-amino-acid polypeptide reads, in one-letter code: Succinate dehydrogenase assembly factor 2-A, mitochondrial (156 aa).

A mitochondrion-targeting transit peptide spans 1-24 (MLRQFLVSTAVRRVVVPSMAQTRC). Positions 35-62 (TPGEIVDYDDPPHIPVPEYPSRPDEPLE) are disordered.

This sequence belongs to the SDHAF2 family. Interacts with the flavoprotein subunit within the SDH catalytic dimer.

The protein resides in the mitochondrion matrix. Its function is as follows. Plays an essential role in the assembly of succinate dehydrogenase (SDH), an enzyme complex (also referred to as respiratory complex II) that is a component of both the tricarboxylic acid (TCA) cycle and the mitochondrial electron transport chain, and which couples the oxidation of succinate to fumarate with the reduction of ubiquinone (coenzyme Q) to ubiquinol. Required for flavinylation (covalent attachment of FAD) of the flavoprotein subunit of the SDH catalytic dimer. This Drosophila ananassae (Fruit fly) protein is Succinate dehydrogenase assembly factor 2-A, mitochondrial.